A 99-amino-acid chain; its full sequence is Integration host factor subunit alpha (99 aa).

This sequence belongs to the bacterial histone-like protein family. Heterodimer of an alpha and a beta chain.

This protein is one of the two subunits of integration host factor, a specific DNA-binding protein that functions in genetic recombination as well as in transcriptional and translational control. The chain is Integration host factor subunit alpha from Xylella fastidiosa (strain M12).